A 548-amino-acid chain; its full sequence is Non-structural protein NS1 (548 aa).

This sequence belongs to the orbivirus non-structural protein NS1 family.

The protein is Non-structural protein NS1 (Segment-5) of Camelus dromedarius (Dromedary).